A 34-amino-acid chain; its full sequence is Peptidoglycan hydrolase P7 (34 aa).

A helical transmembrane segment spans residues 10–26 (VLITLGVLAAVNKVSAL).

It is found in the virion membrane. Exolysin that catalyzes the cleavage of the host peptidoglycans during virus entry. The chain is Peptidoglycan hydrolase P7 (VII) from Pseudoalteromonas espejiana (Bacteriophage PM2).